A 328-amino-acid polypeptide reads, in one-letter code: 2-hydroxyisoflavanone dehydratase (328 aa).

Residues 85 to 87 carry the Involved in the stabilization of the negatively charged intermediate by the formation of the oxyanion hole motif; the sequence is HGG. Residues Thr-173, Asp-272, and His-304 contribute to the active site.

Belongs to the 'GDXG' lipolytic enzyme family.

It carries out the reaction (2R,3S)-2,4',7-trihydroxyisoflavanone = daidzein + H2O + H(+). The enzyme catalyses 2-hydroxy-2,3-dihydrogenistein = genistein + H2O + H(+). The catalysed reaction is a carboxylic ester + H2O = an alcohol + a carboxylate + H(+). It participates in secondary metabolite biosynthesis; flavonoid biosynthesis. Functionally, dehydratase that mediates the biosynthesis of isoflavonoids. Can better use 2,7-dihydroxy-4'-methoxyisoflavanone as substrate. Has also a slight carboxylesterase activity toward p-nitrophenyl butyrate. This chain is 2-hydroxyisoflavanone dehydratase (HIDM), found in Glycyrrhiza echinata (Licorice).